Consider the following 156-residue polypeptide: MPRRREVPKREILPDPKFGNVDLSKFMNVIMESGKKAVAERIIYGALETVEKKANRDPLEVFITALNNVKPMVEVKSRRVGGANYQVPVEVRPVRRMALAMRWLKESARKRSEKSMAQRLANELLEASEGRGGAMKKRDEVHRMAEANKAFSHFRF.

Belongs to the universal ribosomal protein uS7 family. Part of the 30S ribosomal subunit. Contacts proteins S9 and S11.

One of the primary rRNA binding proteins, it binds directly to 16S rRNA where it nucleates assembly of the head domain of the 30S subunit. Is located at the subunit interface close to the decoding center, probably blocks exit of the E-site tRNA. In Methylibium petroleiphilum (strain ATCC BAA-1232 / LMG 22953 / PM1), this protein is Small ribosomal subunit protein uS7.